We begin with the raw amino-acid sequence, 72 residues long: DNA-directed RNA polymerase subunit omega (72 aa).

It belongs to the RNA polymerase subunit omega family. As to quaternary structure, the RNAP catalytic core consists of 2 alpha, 1 beta, 1 beta' and 1 omega subunit. When a sigma factor is associated with the core the holoenzyme is formed, which can initiate transcription.

It catalyses the reaction RNA(n) + a ribonucleoside 5'-triphosphate = RNA(n+1) + diphosphate. In terms of biological role, promotes RNA polymerase assembly. Latches the N- and C-terminal regions of the beta' subunit thereby facilitating its interaction with the beta and alpha subunits. In Petrotoga mobilis (strain DSM 10674 / SJ95), this protein is DNA-directed RNA polymerase subunit omega.